The following is a 414-amino-acid chain: Isocitrate dehydrogenase [NADP] cytoplasmic (414 aa).

N-acetylserine is present on S2. Y42 is subject to Phosphotyrosine. 75–77 (TIT) contacts NADP(+). T77 is a substrate binding site. An N6-acetyllysine modification is found at K81. Residue R82 participates in NADP(+) binding. Substrate-binding positions include 94 to 100 (SPNGTIR) and R109. N6-succinyllysine is present on K126. Residues R132 and K212 each coordinate substrate. 3 positions are modified to N6-acetyllysine: K224, K233, and K243. D252 lines the Mn(2+) pocket. K260 provides a ligand contact to NADP(+). Mn(2+)-binding residues include D275 and D279. An NADP(+)-binding site is contributed by 310 to 315 (GTVTRH). K321 is modified (N6-acetyllysine). N328 provides a ligand contact to NADP(+). Phosphoserine is present on S389. Residue K400 is modified to N6-succinyllysine.

Belongs to the isocitrate and isopropylmalate dehydrogenases family. As to quaternary structure, homodimer. Requires Mg(2+) as cofactor. Mn(2+) is required as a cofactor. Post-translationally, acetylation at Lys-374 dramatically reduces catalytic activity.

The protein localises to the cytoplasm. It is found in the cytosol. It catalyses the reaction D-threo-isocitrate + NADP(+) = 2-oxoglutarate + CO2 + NADPH. Functionally, catalyzes the NADP(+)-dependent oxidative decarboxylation of isocitrate (D-threo-isocitrate) to 2-ketoglutarate (2-oxoglutarate), which is required by other enzymes such as the phytanoyl-CoA dioxygenase. Plays a critical role in the generation of NADPH, an important cofactor in many biosynthesis pathways. May act as a corneal epithelial crystallin and may be involved in maintaining corneal epithelial transparency. In Microtus mexicanus (Mexican vole), this protein is Isocitrate dehydrogenase [NADP] cytoplasmic (IDH1).